Consider the following 335-residue polypeptide: Putative D-threonate 4-phosphate dehydrogenase (335 aa).

Residues H140 and T141 each contribute to the substrate site. Residues H170, H214, and H269 each coordinate a divalent metal cation. Positions 277 and 295 each coordinate substrate.

Belongs to the PdxA family. PdxA2 subfamily. Homodimer. The cofactor is a divalent metal cation.

It catalyses the reaction 4-O-phospho-D-threonate + NAD(+) = dihydroxyacetone phosphate + CO2 + NADH. Catalyzes the NAD-dependent oxidation and subsequent decarboxylation of D-threonate 4-phosphate to produce dihydroxyacetone phosphate (DHAP). The protein is Putative D-threonate 4-phosphate dehydrogenase of Symbiobacterium thermophilum (strain DSM 24528 / JCM 14929 / IAM 14863 / T).